The following is a 441-amino-acid chain: T-box transcription factor TBX20 (441 aa).

Positions 103-282 (LWDKFHDLGT…SNPFAKGFRD (180 aa)) form a DNA-binding region, T-box.

As to expression, expressed throughout all cardiac tissue during later stages of development. Also expressed in the cement gland, jugular vein, lung bud, cloacal aperture, rhombomeres 2, 4, 6 and 8 and in a subset of motor neurons.

The protein localises to the nucleus. Its function is as follows. Transcriptional regulator that may be involved in heart developmental processes. In Xenopus laevis (African clawed frog), this protein is T-box transcription factor TBX20 (tbx20).